Reading from the N-terminus, the 361-residue chain is Hydroxycarboxylate dehydrogenase B (361 aa).

Residues H48, 122 to 124 (GRI), 178 to 182 (LLDYA), H234, N270, and 313 to 316 (GEWE) each bind NAD(+).

This sequence belongs to the LDH2/MDH2 oxidoreductase family.

The catalysed reaction is 2-hydroxyglutarate + NADP(+) = 2-oxoglutarate + NADPH + H(+). It catalyses the reaction 2-hydroxyglutarate + NAD(+) = 2-oxoglutarate + NADH + H(+). The enzyme catalyses 3-phenyllactate + NADP(+) = 3-phenylpyruvate + NADPH + H(+). It carries out the reaction 3-phenyllactate + NAD(+) = 3-phenylpyruvate + NADH + H(+). The catalysed reaction is (2R)-2-hydroxy-3-(4-hydroxyphenyl)propanoate + NAD(+) = 3-(4-hydroxyphenyl)pyruvate + NADH + H(+). It catalyses the reaction (2R)-2-hydroxy-3-(4-hydroxyphenyl)propanoate + NADP(+) = 3-(4-hydroxyphenyl)pyruvate + NADPH + H(+). The enzyme catalyses (2R)-3-(3,4-dihydroxyphenyl)lactate + NADP(+) = 3-(3,4-dihydroxyphenyl)pyruvate + NADPH + H(+). It carries out the reaction (2R)-3-(3,4-dihydroxyphenyl)lactate + NAD(+) = 3-(3,4-dihydroxyphenyl)pyruvate + NADH + H(+). Functionally, catalyzes the NAD(P)H-dependent reduction of 2-oxoglutarate, phenylpyruvate and (4-hydroxyphenyl)pyruvate, leading to the respective 2-hydroxycarboxylate in vitro. Shows a preference for NADPH over NADH as a redox partner. Do not catalyze the reverse reactions. The protein is Hydroxycarboxylate dehydrogenase B of Escherichia coli (strain K12).